A 346-amino-acid chain; its full sequence is MDQDKYLPELVAEKESLDASFVHAMRLLAEEIEKFEGDELRKDGEVKKYLDIISNKNIKLSERVLIPVQQYPKFNFVGKLLGPRGNSMKRLQEETGAKMSILGKGSMRDKGKEEELRKSGEAKYAHLSNDLHVLIEVFAPPGEAYSRMSHALEEIKKFLVPDYNDEIRQEQLRELSYLNGSDDPSRGRSARGRGLRLTSTASPRGRGSAAPPAPPGRGAAAPRGTVSSRTSVPTPARGVSAPRTRGTAGTPGYRAPSLQATHKTYEDYGYDDGYDGEYDDQSYESYDDNYSNQSKSVSEYYEYGHGNNDENYNNYEEDWISSRPNLKAPASRLTRGGYRDHPYGRY.

In terms of domain architecture, KH spans Leu65–Leu131. The segment at Leu175–Ser291 is disordered. The span at Leu195–Gly224 shows a compositional bias: low complexity. Over residues Tyr268–Asp287 the composition is skewed to acidic residues.

It belongs to the KHDRBS family.

The protein resides in the nucleus. In terms of biological role, RNA-binding protein that plays a role in the regulation of alternative splicing. This is KH domain-containing, RNA-binding, signal transduction-associated protein 2 (khdrbs2) from Danio rerio (Zebrafish).